Here is a 327-residue protein sequence, read N- to C-terminus: MKRVFSGVQPSGDIHIGNYLGAMRQFVALQDDYDCFFCVVDLHALTVPQDPVELKKNTIELAALYMAIGLDPKKVTLFVQSHVSAHAELAWLLQCITYFGELSRMTQFKEKSKGKESVSVGLFTYPDLMAADILLYKTHYVPVGEDQKQHLELTRDVAQRFNNRFGETFVIPEPMILKFGARIMSLTNPTKKMSKSDADPNNRVNLLDDPDTIYRKIMKAVTDSESEIRLDWEKKPGISNLLTIYSLFTGMEVDEVVNKFKGQGYGTLKKELAEVVIDKLSVIQKNYRDISEEEVLRVLKEGAERAEAVAVETLKEVKEKMGLILRD.

Residues 9–11 (QPS) and 17–18 (GN) contribute to the ATP site. Residues 10–18 (PSGDIHIGN) carry the 'HIGH' region motif. Position 132 (Asp132) interacts with L-tryptophan. Residues 144–146 (GED), Ile183, and 192–196 (KMSKS) each bind ATP. The short motif at 192 to 196 (KMSKS) is the 'KMSKS' region element.

Belongs to the class-I aminoacyl-tRNA synthetase family. In terms of assembly, homodimer.

It is found in the cytoplasm. The enzyme catalyses tRNA(Trp) + L-tryptophan + ATP = L-tryptophyl-tRNA(Trp) + AMP + diphosphate + H(+). Catalyzes the attachment of tryptophan to tRNA(Trp). The chain is Tryptophan--tRNA ligase from Caldanaerobacter subterraneus subsp. tengcongensis (strain DSM 15242 / JCM 11007 / NBRC 100824 / MB4) (Thermoanaerobacter tengcongensis).